A 461-amino-acid polypeptide reads, in one-letter code: Trimethylamine monooxygenase (461 aa).

The FAD site is built by Ser-14, Glu-39, Lys-40, Gln-41, Met-47, Trp-48, and His-64. 2 residues coordinate NADP(+): Trp-72 and Asn-74. FAD contacts are provided by Asn-74 and Ala-127. Residues Ser-206, Ser-207, Ser-209, Arg-230, and Thr-231 each contribute to the NADP(+) site. FAD contacts are provided by Gln-319 and Thr-322. Arg-413 serves as a coordination point for NADP(+).

It belongs to the FMO family. It depends on FAD as a cofactor.

It carries out the reaction trimethylamine + NADPH + O2 = trimethylamine N-oxide + NADP(+) + H2O. Its function is as follows. Catalyzes the oxidation of trimethylamine (TMA) to produce trimethylamine N-oxide (TMAO). The produced TMAO is accumulated in the cell, functioning as a piezolyte, improving both growth and survival at high hydrostatic pressure (HHP). This chain is Trimethylamine monooxygenase, found in Myroides profundi.